The chain runs to 691 residues: DNA ligase (691 aa).

NAD(+)-binding positions include 41-45 (DAEYD), 90-91 (SL), and Glu130. The N6-AMP-lysine intermediate role is filled by Lys132. NAD(+) is bound by residues Arg153, Glu190, Lys307, and Lys331. Zn(2+) contacts are provided by Cys425, Cys428, Cys443, and Cys449. The 82-residue stretch at 610-691 (APQGVLAGKT…LHQLLEGNTP (82 aa)) folds into the BRCT domain.

It belongs to the NAD-dependent DNA ligase family. LigA subfamily. Mg(2+) serves as cofactor. The cofactor is Mn(2+).

The catalysed reaction is NAD(+) + (deoxyribonucleotide)n-3'-hydroxyl + 5'-phospho-(deoxyribonucleotide)m = (deoxyribonucleotide)n+m + AMP + beta-nicotinamide D-nucleotide.. In terms of biological role, DNA ligase that catalyzes the formation of phosphodiester linkages between 5'-phosphoryl and 3'-hydroxyl groups in double-stranded DNA using NAD as a coenzyme and as the energy source for the reaction. It is essential for DNA replication and repair of damaged DNA. In Burkholderia cenocepacia (strain HI2424), this protein is DNA ligase.